We begin with the raw amino-acid sequence, 210 residues long: Superoxide dismutase [Mn], mitochondrial (210 aa).

His29, His77, Asp164, and His168 together coordinate Mn(2+).

It belongs to the iron/manganese superoxide dismutase family. As to quaternary structure, homotetramer. It depends on Mn(2+) as a cofactor.

The protein resides in the mitochondrion matrix. It catalyses the reaction 2 superoxide + 2 H(+) = H2O2 + O2. Destroys superoxide anion radicals which are normally produced within the cells and which are toxic to biological systems. This chain is Superoxide dismutase [Mn], mitochondrial (sodB), found in Aspergillus oryzae (strain ATCC 42149 / RIB 40) (Yellow koji mold).